The sequence spans 459 residues: Adenylosuccinate synthetase isozyme 1 C (459 aa).

The tract at residues 1–31 (MSFSWSAKDHKSYTNPPSNPTQGLKRPRNDT) is disordered. Over residues 13–22 (YTNPPSNPTQ) the composition is skewed to polar residues. GTP contacts are provided by residues 44–50 (GDEGKGK) and 72–74 (GHT). The active-site Proton acceptor is aspartate 45. The Mg(2+) site is built by aspartate 45 and glycine 72. Aspartate 45 serves as a coordination point for substrate. IMP contacts are provided by residues 45–48 (DEGK), 70–73 (NAGH), threonine 165, arginine 179, asparagine 258, threonine 273, and arginine 337. Residue histidine 73 is the Proton donor of the active site. 333 to 339 (VTTGRKR) serves as a coordination point for substrate. GTP-binding positions include arginine 339, 365-367 (KLD), and 447-450 (GVGK).

This sequence belongs to the adenylosuccinate synthetase family. Homodimer. Mg(2+) serves as cofactor.

The protein localises to the cytoplasm. It carries out the reaction IMP + L-aspartate + GTP = N(6)-(1,2-dicarboxyethyl)-AMP + GDP + phosphate + 2 H(+). Its pathway is purine metabolism; AMP biosynthesis via de novo pathway; AMP from IMP: step 1/2. In terms of biological role, component of the purine nucleotide cycle (PNC), which interconverts IMP and AMP to regulate the nucleotide levels in various tissues, and which contributes to glycolysis and ammoniagenesis. Catalyzes the first committed step in the biosynthesis of AMP from IMP. This chain is Adenylosuccinate synthetase isozyme 1 C (adss1c), found in Salmo salar (Atlantic salmon).